A 444-amino-acid polypeptide reads, in one-letter code: Exodeoxyribonuclease 7 large subunit (444 aa).

Belongs to the XseA family. In terms of assembly, heterooligomer composed of large and small subunits.

It localises to the cytoplasm. The catalysed reaction is Exonucleolytic cleavage in either 5'- to 3'- or 3'- to 5'-direction to yield nucleoside 5'-phosphates.. Functionally, bidirectionally degrades single-stranded DNA into large acid-insoluble oligonucleotides, which are then degraded further into small acid-soluble oligonucleotides. The chain is Exodeoxyribonuclease 7 large subunit from Rickettsia akari (strain Hartford).